The primary structure comprises 941 residues: Isoleucine--tRNA ligase (941 aa).

Residues 59–69 carry the 'HIGH' region motif; the sequence is PYANGNIHIGH. An L-isoleucyl-5'-AMP-binding site is contributed by Glu-562. The 'KMSKS' region motif lies at 603-607; sequence KMSKS. Residue Lys-606 coordinates ATP. Residues Cys-904, Cys-907, Cys-924, and Cys-927 each coordinate Zn(2+).

It belongs to the class-I aminoacyl-tRNA synthetase family. IleS type 1 subfamily. Monomer. The cofactor is Zn(2+).

Its subcellular location is the cytoplasm. It catalyses the reaction tRNA(Ile) + L-isoleucine + ATP = L-isoleucyl-tRNA(Ile) + AMP + diphosphate. Catalyzes the attachment of isoleucine to tRNA(Ile). As IleRS can inadvertently accommodate and process structurally similar amino acids such as valine, to avoid such errors it has two additional distinct tRNA(Ile)-dependent editing activities. One activity is designated as 'pretransfer' editing and involves the hydrolysis of activated Val-AMP. The other activity is designated 'posttransfer' editing and involves deacylation of mischarged Val-tRNA(Ile). The sequence is that of Isoleucine--tRNA ligase from Haemophilus influenzae (strain PittGG).